The primary structure comprises 639 residues: Chaperone protein DnaK (639 aa).

Thr-198 carries the phosphothreonine; by autocatalysis modification. Positions 604–639 (KSQAQGGDNADAGKQANAAADDVVDAEFEEVKDDKK) are disordered. A compositionally biased stretch (low complexity) spans 606 to 624 (QAQGGDNADAGKQANAAAD). Acidic residues predominate over residues 625 to 639 (DVVDAEFEEVKDDKK).

Belongs to the heat shock protein 70 family.

Functionally, acts as a chaperone. In Shewanella baltica (strain OS223), this protein is Chaperone protein DnaK.